A 952-amino-acid chain; its full sequence is Isoleucine--tRNA ligase (952 aa).

Residues 58–68 (PYANGDIHIGH) carry the 'HIGH' region motif. Glu-576 is an L-isoleucyl-5'-AMP binding site. The 'KMSKS' region motif lies at 617–621 (KMSKS). Lys-620 is an ATP binding site. Zn(2+)-binding residues include Cys-915, Cys-918, Cys-935, and Cys-938.

Belongs to the class-I aminoacyl-tRNA synthetase family. IleS type 1 subfamily. Monomer. Zn(2+) serves as cofactor.

The protein localises to the cytoplasm. The catalysed reaction is tRNA(Ile) + L-isoleucine + ATP = L-isoleucyl-tRNA(Ile) + AMP + diphosphate. In terms of biological role, catalyzes the attachment of isoleucine to tRNA(Ile). As IleRS can inadvertently accommodate and process structurally similar amino acids such as valine, to avoid such errors it has two additional distinct tRNA(Ile)-dependent editing activities. One activity is designated as 'pretransfer' editing and involves the hydrolysis of activated Val-AMP. The other activity is designated 'posttransfer' editing and involves deacylation of mischarged Val-tRNA(Ile). The chain is Isoleucine--tRNA ligase from Aliivibrio fischeri (strain ATCC 700601 / ES114) (Vibrio fischeri).